A 467-amino-acid chain; its full sequence is UDP-N-acetylmuramate--L-alanine ligase (467 aa).

Residue 114–120 (GTHGKTT) coordinates ATP.

It belongs to the MurCDEF family.

The protein resides in the cytoplasm. The catalysed reaction is UDP-N-acetyl-alpha-D-muramate + L-alanine + ATP = UDP-N-acetyl-alpha-D-muramoyl-L-alanine + ADP + phosphate + H(+). The protein operates within cell wall biogenesis; peptidoglycan biosynthesis. Functionally, cell wall formation. This is UDP-N-acetylmuramate--L-alanine ligase from Chlorobium chlorochromatii (strain CaD3).